We begin with the raw amino-acid sequence, 678 residues long: Glycine--tRNA ligase beta subunit (678 aa).

It belongs to the class-II aminoacyl-tRNA synthetase family. In terms of assembly, tetramer of two alpha and two beta subunits.

Its subcellular location is the cytoplasm. The enzyme catalyses tRNA(Gly) + glycine + ATP = glycyl-tRNA(Gly) + AMP + diphosphate. In Streptococcus suis (strain 98HAH33), this protein is Glycine--tRNA ligase beta subunit.